A 366-amino-acid polypeptide reads, in one-letter code: Peptide chain release factor 2 (366 aa).

The residue at position 251 (Gln-251) is an N5-methylglutamine.

The protein belongs to the prokaryotic/mitochondrial release factor family. In terms of processing, methylated by PrmC. Methylation increases the termination efficiency of RF2.

Its subcellular location is the cytoplasm. Functionally, peptide chain release factor 2 directs the termination of translation in response to the peptide chain termination codons UGA and UAA. This Campylobacter lari (strain RM2100 / D67 / ATCC BAA-1060) protein is Peptide chain release factor 2.